Reading from the N-terminus, the 459-residue chain is 11S globulin seed storage protein 2 (459 aa).

An N-terminal signal peptide occupies residues 1–21 (MVAFKFLLALSLSLLVSAAIA). 2 disulfides stabilise this stretch: Cys-34-Cys-67 and Cys-110-Cys-284. Cupin type-1 domains lie at 37-237 (QRIS…ETIR) and 290-439 (TNVE…NQAQ). Residues 118 to 139 (RSQRTMERTEASEQQDRGSVRD) are disordered. Over residues 121–139 (RTMERTEASEQQDRGSVRD) the composition is skewed to basic and acidic residues.

This sequence belongs to the 11S seed storage protein (globulins) family. In terms of assembly, homohexamer. Each subunit is composed of an acidic and a basic chain derived from a single precursor and linked by a disulfide bond. As to expression, expressed in seeds (at protein level). Expressed in seeds.

Seed storage protein. This Sesamum indicum (Oriental sesame) protein is 11S globulin seed storage protein 2.